The primary structure comprises 507 residues: Nuclear poly(A) polymerase 3 (507 aa).

ATP-binding positions include 79-81 (YGS), 91-94 (SDID), aspartate 147, lysine 208, tyrosine 217, and 226-227 (GV). Mg(2+) contacts are provided by aspartate 92, aspartate 94, and aspartate 147.

This sequence belongs to the poly(A) polymerase family. In terms of assembly, monomer. Forms a complex with cleavage and polyadenylation specificity factor (CPSF) subunits FIPS5 and CPSF30. It depends on Mg(2+) as a cofactor. Mn(2+) serves as cofactor. As to expression, expressed in leaves (mostly in petioles and tips), cotyledon, roots (tips, vascular tissue of the radicle, and throughout the root tissue excluding the elongation zone), stems, and flowers (restricted to the stigma and the pollen in mature anthers). Active in the primary and secondary root systems.

It localises to the nucleus. The enzyme catalyses RNA(n) + ATP = RNA(n)-3'-adenine ribonucleotide + diphosphate. Functionally, essential protein. Polymerase that creates the 3'-poly(A) tail of mRNA's. Also required for the endoribonucleolytic cleavage reaction at some polyadenylation sites. May acquire specificity through interaction with a cleavage and polyadenylation specificity factor (CPSF) at its C-terminus. This Arabidopsis thaliana (Mouse-ear cress) protein is Nuclear poly(A) polymerase 3.